Reading from the N-terminus, the 85-residue chain is Exodeoxyribonuclease 7 small subunit (85 aa).

It belongs to the XseB family. Heterooligomer composed of large and small subunits.

It localises to the cytoplasm. It carries out the reaction Exonucleolytic cleavage in either 5'- to 3'- or 3'- to 5'-direction to yield nucleoside 5'-phosphates.. Bidirectionally degrades single-stranded DNA into large acid-insoluble oligonucleotides, which are then degraded further into small acid-soluble oligonucleotides. This is Exodeoxyribonuclease 7 small subunit from Alkalilimnicola ehrlichii (strain ATCC BAA-1101 / DSM 17681 / MLHE-1).